The following is a 428-amino-acid chain: Pyruvate dehydrogenase E1 component subunit alpha-3, chloroplastic (428 aa).

A chloroplast-targeting transit peptide spans 1-61 (MATAFAPTKL…NATRRSPVVS (61 aa)). Positions 115, 141, 142, 190, 192, 227, 228, and 256 each coordinate pyruvate. Residues Tyr141, Arg142, Ala190, Ile192, Asp227, Gly228, Asn256, and His325 each coordinate thiamine diphosphate. Asp227 lines the Mg(2+) pocket. Mg(2+) is bound at residue Asn256.

In terms of assembly, tetramer of 2 alpha and 2 beta subunits. It depends on thiamine diphosphate as a cofactor. Mg(2+) is required as a cofactor.

The protein resides in the plastid. It is found in the chloroplast. The enzyme catalyses N(6)-[(R)-lipoyl]-L-lysyl-[protein] + pyruvate + H(+) = N(6)-[(R)-S(8)-acetyldihydrolipoyl]-L-lysyl-[protein] + CO2. In terms of biological role, the pyruvate dehydrogenase complex catalyzes the overall conversion of pyruvate to acetyl-CoA and CO(2). It contains multiple copies of three enzymatic components: pyruvate dehydrogenase (E1), dihydrolipoamide acetyltransferase (E2) and lipoamide dehydrogenase (E3). This is Pyruvate dehydrogenase E1 component subunit alpha-3, chloroplastic (PDH-E1 ALPHA) from Arabidopsis thaliana (Mouse-ear cress).